Reading from the N-terminus, the 171-residue chain is Spiderine-2b (171 aa).

The signal sequence occupies residues methionine 1–alanine 18. The propeptide at threonine 19–arginine 58 is removed in mature form. Residues lysine 59–leucine 104 form a linear cationic cytotoxin domain region. The Oxytoxin-type inhibitor cystine knot (ICK) domain occupies asparagine 118–glutamate 171. 5 cysteine pairs are disulfide-bonded: cysteine 121/cysteine 135, cysteine 128/cysteine 140, cysteine 132/cysteine 167, cysteine 134/cysteine 156, and cysteine 142/cysteine 154.

This sequence belongs to the spiderine family. Cationic/spiderine subfamily. In terms of tissue distribution, expressed by the venom gland.

The protein resides in the secreted. In terms of biological role, has antimicrobial, insecticidal, cytolytic and cytotoxic activity. This Oxyopes takobius (Lynx spider) protein is Spiderine-2b.